The chain runs to 102 residues: Co-chaperonin GroES (102 aa).

Belongs to the GroES chaperonin family. In terms of assembly, heptamer of 7 subunits arranged in a ring. Interacts with the chaperonin GroEL.

The protein resides in the cytoplasm. Together with the chaperonin GroEL, plays an essential role in assisting protein folding. The GroEL-GroES system forms a nano-cage that allows encapsulation of the non-native substrate proteins and provides a physical environment optimized to promote and accelerate protein folding. GroES binds to the apical surface of the GroEL ring, thereby capping the opening of the GroEL channel. This chain is Co-chaperonin GroES, found in Chlamydia muridarum (strain MoPn / Nigg).